Reading from the N-terminus, the 459-residue chain is Cysteine--tRNA ligase (459 aa).

A Zn(2+)-binding site is contributed by Cys29. The short motif at 31–41 (MTVYDLCHLGH) is the 'HIGH' region element. Zn(2+) is bound by residues Cys213, His238, and Glu242. The 'KMSKS' region signature appears at 270–274 (KMSKS). An ATP-binding site is contributed by Lys273.

Belongs to the class-I aminoacyl-tRNA synthetase family. In terms of assembly, monomer. The cofactor is Zn(2+).

Its subcellular location is the cytoplasm. The catalysed reaction is tRNA(Cys) + L-cysteine + ATP = L-cysteinyl-tRNA(Cys) + AMP + diphosphate. The sequence is that of Cysteine--tRNA ligase from Variovorax paradoxus (strain S110).